Here is a 119-residue protein sequence, read N- to C-terminus: Ribonuclease P protein component (119 aa).

The protein belongs to the RnpA family. In terms of assembly, consists of a catalytic RNA component (M1 or rnpB) and a protein subunit.

The enzyme catalyses Endonucleolytic cleavage of RNA, removing 5'-extranucleotides from tRNA precursor.. Functionally, RNaseP catalyzes the removal of the 5'-leader sequence from pre-tRNA to produce the mature 5'-terminus. It can also cleave other RNA substrates such as 4.5S RNA. The protein component plays an auxiliary but essential role in vivo by binding to the 5'-leader sequence and broadening the substrate specificity of the ribozyme. This chain is Ribonuclease P protein component, found in Histophilus somni (strain 129Pt) (Haemophilus somnus).